The sequence spans 186 residues: Peptidyl-tRNA hydrolase (186 aa).

Tyrosine 17 serves as a coordination point for tRNA. The Proton acceptor role is filled by histidine 22. 2 residues coordinate tRNA: tyrosine 64 and asparagine 66.

It belongs to the PTH family. As to quaternary structure, monomer.

It localises to the cytoplasm. It catalyses the reaction an N-acyl-L-alpha-aminoacyl-tRNA + H2O = an N-acyl-L-amino acid + a tRNA + H(+). Functionally, hydrolyzes ribosome-free peptidyl-tRNAs (with 1 or more amino acids incorporated), which drop off the ribosome during protein synthesis, or as a result of ribosome stalling. Catalyzes the release of premature peptidyl moieties from peptidyl-tRNA molecules trapped in stalled 50S ribosomal subunits, and thus maintains levels of free tRNAs and 50S ribosomes. The polypeptide is Peptidyl-tRNA hydrolase (Methylacidiphilum infernorum (isolate V4) (Methylokorus infernorum (strain V4))).